The sequence spans 450 residues: Ammonium transporter Rh type A (450 aa).

At 1–4 (MRFK) the chain is on the cytoplasmic side. The chain crosses the membrane as a helical span at residues 5–25 (FSLIALSLEVVMIVSFALFVE). At 26–72 (YETSQNGSQKSASQQNASQQNAAAQQNASQQGNASSPAKEDQFFQLY) the chain is on the extracellular side. N-linked (GlcNAc...) asparagine glycosylation is found at asparagine 31, asparagine 41, asparagine 52, and asparagine 58. The disordered stretch occupies residues 34–61 (QKSASQQNASQQNAAAQQNASQQGNASS). The chain crosses the membrane as a helical span at residues 73–93 (PLFQHVHVMIFVGFGFLMTFL). Topologically, residues 94–97 (KKYG) are cytoplasmic. The chain crosses the membrane as a helical span at residues 98 to 118 (FSGVGFNLFLAALGLQWGTIV). Residues 119-134 (QGLLHSHGLKFPFRIK) are Extracellular-facing. A helical membrane pass occupies residues 135–155 (NMINADFSTATVLISFGAVLG). Residues 156–159 (KTSP) lie on the Cytoplasmic side of the membrane. Residues 160–180 (IQMIIMTILEIAVFAGNEHLV) traverse the membrane as a helical segment. Over 181-189 (TEIFKASDT) the chain is Extracellular. A helical transmembrane segment spans residues 190 to 210 (GASMTIHAFGAYFGLAVAGVL). At 211–229 (YRSGLKHGHPNEESVYHSD) the chain is on the cytoplasmic side. Residues 230 to 250 (LFAMIGTLFLWMFWPSFNSAI) traverse the membrane as a helical segment. Over 251–260 (AQPENNQYRA) the chain is Extracellular. The helical transmembrane segment at 261–281 (IVNTYMSLAACVITAYALSSL) threads the bilayer. Topologically, residues 282 to 289 (VERRGRLD) are cytoplasmic. The helical transmembrane segment at 290–307 (MVHIQNATLAGGVAVGTC) threads the bilayer. Over 308–311 (ADME) the chain is Extracellular. A helical transmembrane segment spans residues 312-332 (IPLYFAMTIGSIAGIISVLGY). Residues 333–349 (KFLSPLLAHKLMIHDTC) lie on the Cytoplasmic side of the membrane. The helical transmembrane segment at 350 to 370 (GVHNLHGLPGVFGGLASIVAI) threads the bilayer. Over 371–384 (SWGKSTVSTMAMQA) the chain is Extracellular. A helical membrane pass occupies residues 385–405 (TALGSSIGSAIVGGLVTGLIL). Residues 406 to 450 (KLPVWNQPPDEYCFDDSVSWKVPKYRELDNYFFQHVTHNHVEHEV) lie on the Cytoplasmic side of the membrane.

Belongs to the ammonium transporter (TC 2.A.49) family. Rh subfamily. In terms of assembly, homodimer. Heterotrimer; a RHCE monomer interacts with a RHAG homodimer. Component of the ankyrin-1 complex in the erythrocyte, composed of ANK1, RHCE, RHAG, SLC4A1, EPB42, GYPA, GYPB and AQP1. Interacts with GYPB (via the N-terminal); this interaction bridges the (RHAG)2(RHCE) heterotrimer with the SLC4A1 Band 3 I dimer complexed with GYPA. Glycosylated.

It is found in the membrane. The enzyme catalyses methylamine(out) = methylamine(in). It catalyses the reaction NH4(+)(in) = NH4(+)(out). The catalysed reaction is CO2(out) = CO2(in). Component of the ankyrin-1 complex, a multiprotein complex involved in the stability and shape of the erythrocyte membrane. Heterotrimer with RHCE (RHAG)2(RHCE), that transports ammonium and its related derivative methylammonium, in both neutral and ionic forms, across the erythrocyte membrane. The transport of NH4(+) is electrogenic and masks the NH3 transport. Also, may act as a CO2 channel. Moreover in erythrocyte, regulates RHD membrane expression and is associated with rhesus blood group antigen expression. This is Ammonium transporter Rh type A from Rattus norvegicus (Rat).